Reading from the N-terminus, the 369-residue chain is Probable dual-specificity RNA methyltransferase RlmN (369 aa).

Glu-108 (proton acceptor) is an active-site residue. The 239-residue stretch at 114–352 (YPDRATLCIS…CTVRDTKGQE (239 aa)) folds into the Radical SAM core domain. Cys-121 and Cys-357 are disulfide-bonded. Residues Cys-128, Cys-132, and Cys-135 each contribute to the [4Fe-4S] cluster site. Residues 178-179 (GE), Ser-212, 235-237 (SLH), and Asn-314 each bind S-adenosyl-L-methionine. Residue Cys-357 is the S-methylcysteine intermediate of the active site.

This sequence belongs to the radical SAM superfamily. RlmN family. [4Fe-4S] cluster is required as a cofactor.

It is found in the cytoplasm. It catalyses the reaction adenosine(2503) in 23S rRNA + 2 reduced [2Fe-2S]-[ferredoxin] + 2 S-adenosyl-L-methionine = 2-methyladenosine(2503) in 23S rRNA + 5'-deoxyadenosine + L-methionine + 2 oxidized [2Fe-2S]-[ferredoxin] + S-adenosyl-L-homocysteine. The enzyme catalyses adenosine(37) in tRNA + 2 reduced [2Fe-2S]-[ferredoxin] + 2 S-adenosyl-L-methionine = 2-methyladenosine(37) in tRNA + 5'-deoxyadenosine + L-methionine + 2 oxidized [2Fe-2S]-[ferredoxin] + S-adenosyl-L-homocysteine. In terms of biological role, specifically methylates position 2 of adenine 2503 in 23S rRNA and position 2 of adenine 37 in tRNAs. This chain is Probable dual-specificity RNA methyltransferase RlmN, found in Corynebacterium efficiens (strain DSM 44549 / YS-314 / AJ 12310 / JCM 11189 / NBRC 100395).